The chain runs to 296 residues: Bifunctional protein FolD (296 aa).

NADP(+) is bound by residues 166–168 (GRS), Ser195, and Thr236.

This sequence belongs to the tetrahydrofolate dehydrogenase/cyclohydrolase family. Homodimer.

The catalysed reaction is (6R)-5,10-methylene-5,6,7,8-tetrahydrofolate + NADP(+) = (6R)-5,10-methenyltetrahydrofolate + NADPH. It carries out the reaction (6R)-5,10-methenyltetrahydrofolate + H2O = (6R)-10-formyltetrahydrofolate + H(+). Its pathway is one-carbon metabolism; tetrahydrofolate interconversion. Functionally, catalyzes the oxidation of 5,10-methylenetetrahydrofolate to 5,10-methenyltetrahydrofolate and then the hydrolysis of 5,10-methenyltetrahydrofolate to 10-formyltetrahydrofolate. The sequence is that of Bifunctional protein FolD from Dehalococcoides mccartyi (strain CBDB1).